Reading from the N-terminus, the 454-residue chain is Enolase (454 aa).

Gln167 serves as a coordination point for (2R)-2-phosphoglycerate. Glu209 acts as the Proton donor in catalysis. Residues Asp250, Glu312, and Asp339 each coordinate Mg(2+). (2R)-2-phosphoglycerate-binding residues include Lys364, Arg393, Ser394, and Lys415. The Proton acceptor role is filled by Lys364.

It belongs to the enolase family. Mg(2+) is required as a cofactor.

Its subcellular location is the cytoplasm. It is found in the secreted. It localises to the cell surface. The catalysed reaction is (2R)-2-phosphoglycerate = phosphoenolpyruvate + H2O. The protein operates within carbohydrate degradation; glycolysis; pyruvate from D-glyceraldehyde 3-phosphate: step 4/5. Catalyzes the reversible conversion of 2-phosphoglycerate (2-PG) into phosphoenolpyruvate (PEP). It is essential for the degradation of carbohydrates via glycolysis. The protein is Enolase of Mycoplasmopsis agalactiae (strain NCTC 10123 / CIP 59.7 / PG2) (Mycoplasma agalactiae).